We begin with the raw amino-acid sequence, 270 residues long: Feruloyl esterase C (270 aa).

Positions 1–21 are cleaved as a signal peptide; it reads MLRAVLLPTLLAFGAFTPVHG.

This sequence belongs to the faeC family.

The protein resides in the secreted. The enzyme catalyses feruloyl-polysaccharide + H2O = ferulate + polysaccharide.. Involved in degradation of plant cell walls. Hydrolyzes the feruloyl-arabinose ester bond in arabinoxylans, and the feruloyl-galactose ester bond in pectin. Active against paranitrophenyl-acetate, methyl ferulate and wheat arabinoxylan. The chain is Feruloyl esterase C (faeC) from Emericella nidulans (strain FGSC A4 / ATCC 38163 / CBS 112.46 / NRRL 194 / M139) (Aspergillus nidulans).